Here is a 226-residue protein sequence, read N- to C-terminus: Phosphoglycolate phosphatase (226 aa).

The active-site Nucleophile is the aspartate 5. Mg(2+)-binding residues include aspartate 5 and aspartate 7. Position 142 (lysine 142) interacts with substrate. 2 residues coordinate Mg(2+): aspartate 164 and aspartate 168.

This sequence belongs to the archaeal SPP-like hydrolase family. Mg(2+) is required as a cofactor.

It carries out the reaction 2-phosphoglycolate + H2O = glycolate + phosphate. Catalyzes the dephosphorylation of 2-phosphoglycolate. This is Phosphoglycolate phosphatase from Sulfurisphaera tokodaii (strain DSM 16993 / JCM 10545 / NBRC 100140 / 7) (Sulfolobus tokodaii).